The chain runs to 89 residues: Small ribosomal subunit protein bS18 (89 aa).

It belongs to the bacterial ribosomal protein bS18 family. In terms of assembly, part of the 30S ribosomal subunit. Forms a tight heterodimer with protein bS6.

In terms of biological role, binds as a heterodimer with protein bS6 to the central domain of the 16S rRNA, where it helps stabilize the platform of the 30S subunit. The chain is Small ribosomal subunit protein bS18 from Phocaeicola vulgatus (strain ATCC 8482 / DSM 1447 / JCM 5826 / CCUG 4940 / NBRC 14291 / NCTC 11154) (Bacteroides vulgatus).